The chain runs to 411 residues: Anthranilate synthase component 1 (411 aa).

L-tryptophan is bound by residues serine 27 and 203 to 205; that span reads PYM. Residue 237–238 coordinates chorismate; it reads GT. Residue glutamate 262 coordinates Mg(2+). Chorismate-binding positions include tyrosine 350, arginine 369, 382–384, and glycine 384; that span reads GAG. Glutamate 397 lines the Mg(2+) pocket.

This sequence belongs to the anthranilate synthase component I family. Heterotetramer consisting of two non-identical subunits: a beta subunit (TrpG) and a large alpha subunit (TrpE). Mg(2+) is required as a cofactor.

The catalysed reaction is chorismate + L-glutamine = anthranilate + pyruvate + L-glutamate + H(+). It functions in the pathway amino-acid biosynthesis; L-tryptophan biosynthesis; L-tryptophan from chorismate: step 1/5. Feedback inhibited by tryptophan. In terms of biological role, part of a heterotetrameric complex that catalyzes the two-step biosynthesis of anthranilate, an intermediate in the biosynthesis of L-tryptophan. In the first step, the glutamine-binding beta subunit (TrpG) of anthranilate synthase (AS) provides the glutamine amidotransferase activity which generates ammonia as a substrate that, along with chorismate, is used in the second step, catalyzed by the large alpha subunit of AS (TrpE) to produce anthranilate. In the absence of TrpG, TrpE can synthesize anthranilate directly from chorismate and high concentrations of ammonia. In Archaeoglobus fulgidus (strain ATCC 49558 / DSM 4304 / JCM 9628 / NBRC 100126 / VC-16), this protein is Anthranilate synthase component 1 (trpE).